We begin with the raw amino-acid sequence, 398 residues long: Fructose-bisphosphate aldolase 2, chloroplastic (398 aa).

Residues 1–46 (MASTSLLKASPVLDKSEWVKGQSVLFRQPSSASVVLRNRATSLTVR) constitute a chloroplast transit peptide. Arg95 contacts substrate. A Phosphoserine modification is found at Ser157. Lys185 is a binding site for substrate. Residue Ser215 is modified to Phosphoserine. Glu225 serves as the catalytic Proton acceptor. Lys267 serves as the catalytic Schiff-base intermediate with dihydroxyacetone-P. 309–311 (SGG) is a binding site for substrate. An N6,N6,N6-trimethyllysine modification is found at Lys394.

It belongs to the class I fructose-bisphosphate aldolase family. In terms of assembly, homotetramer. Post-translationally, can be trimethylated at Lys-394 by LSMT-L. The methylation level has no influence on the ologomerization state or on the kinetic properties of the enzyme. Phosphorylated on tyrosine residues in response to abscisic acid (ABA) in germinating seeds. As to expression, highly expressed in rosettes leaves.

Its subcellular location is the plastid. The protein localises to the chloroplast. It is found in the plastoglobule. The protein resides in the chloroplast stroma. It carries out the reaction beta-D-fructose 1,6-bisphosphate = D-glyceraldehyde 3-phosphate + dihydroxyacetone phosphate. Its pathway is carbohydrate degradation; glycolysis; D-glyceraldehyde 3-phosphate and glycerone phosphate from D-glucose: step 4/4. In terms of biological role, plays a key role in glycolysis and gluconeogenesis. The protein is Fructose-bisphosphate aldolase 2, chloroplastic of Arabidopsis thaliana (Mouse-ear cress).